Here is a 161-residue protein sequence, read N- to C-terminus: Calmodulin-like protein (161 aa).

4 EF-hand domains span residues 21–56 (EEID…LGQN), 57–92 (PTEQ…MMKE), 93–128 (TDSE…MGMQ), and 129–161 (FSEE…MSNQ). Residues D34, D36, N38, T40, E45, D70, D72, N74, Q76, E81, D106, D108, N110, E117, D142, D144, D146, E148, and E153 each contribute to the Ca(2+) site.

It belongs to the calmodulin family.

Functionally, this protein resembles calmodulin in sequence but possibly resembles troponin C in function. In Caenorhabditis elegans, this protein is Calmodulin-like protein (cal-1).